A 78-amino-acid polypeptide reads, in one-letter code: Large ribosomal subunit protein bL28 (78 aa).

It belongs to the bacterial ribosomal protein bL28 family.

The polypeptide is Large ribosomal subunit protein bL28 (Escherichia coli O139:H28 (strain E24377A / ETEC)).